We begin with the raw amino-acid sequence, 338 residues long: Ferrochelatase (338 aa).

Residues H202 and E283 each contribute to the Fe cation site.

The protein belongs to the ferrochelatase family.

The protein localises to the cytoplasm. The enzyme catalyses heme b + 2 H(+) = protoporphyrin IX + Fe(2+). The protein operates within porphyrin-containing compound metabolism; protoheme biosynthesis; protoheme from protoporphyrin-IX: step 1/1. Functionally, catalyzes the ferrous insertion into protoporphyrin IX. The sequence is that of Ferrochelatase from Acinetobacter baumannii (strain ATCC 17978 / DSM 105126 / CIP 53.77 / LMG 1025 / NCDC KC755 / 5377).